Reading from the N-terminus, the 300-residue chain is UDP-N-acetylenolpyruvoylglucosamine reductase (300 aa).

The 166-residue stretch at 28-193 folds into the FAD-binding PCMH-type domain; the sequence is KTGGPADVLA…LQATFALEKG (166 aa). The active site involves arginine 172. The Proton donor role is filled by serine 222. Glutamate 292 is an active-site residue.

This sequence belongs to the MurB family. It depends on FAD as a cofactor.

The protein localises to the cytoplasm. It carries out the reaction UDP-N-acetyl-alpha-D-muramate + NADP(+) = UDP-N-acetyl-3-O-(1-carboxyvinyl)-alpha-D-glucosamine + NADPH + H(+). Its pathway is cell wall biogenesis; peptidoglycan biosynthesis. In terms of biological role, cell wall formation. This Enterococcus faecalis (strain ATCC 700802 / V583) protein is UDP-N-acetylenolpyruvoylglucosamine reductase.